We begin with the raw amino-acid sequence, 84 residues long: uncharacterized protein (84 aa).

Residues 7 to 62 (IDVMLAKRKMSVTELSERVGITMANLSILKNGKAKAIRLSTLEAICKALECQPGDI) form the HTH cro/C1-type domain. Residues 18-37 (VTELSERVGITMANLSILKN) constitute a DNA-binding region (H-T-H motif).

This is an uncharacterized protein from Bacillus subtilis (strain 168).